Here is a 129-residue protein sequence, read N- to C-terminus: Small ribosomal subunit protein uS11 (129 aa).

This sequence belongs to the universal ribosomal protein uS11 family. Part of the 30S ribosomal subunit. Interacts with proteins S7 and S18. Binds to IF-3.

Located on the platform of the 30S subunit, it bridges several disparate RNA helices of the 16S rRNA. Forms part of the Shine-Dalgarno cleft in the 70S ribosome. This Lysinibacillus sphaericus (strain C3-41) protein is Small ribosomal subunit protein uS11.